The primary structure comprises 125 residues: MPTINQLVRKGRKTAEYKSNSPALKQCPQKRGVCTVVKTSTPKKPNSALRKVARVRLTNGYEVTAYIPGIGHNLQEHSVVLIRGGRVKDLPGVRYHIVRGALDAAGVANRMQARSKYGAKKPKQK.

D89 carries the post-translational modification 3-methylthioaspartic acid.

Belongs to the universal ribosomal protein uS12 family. Part of the 30S ribosomal subunit. Contacts proteins S8 and S17. May interact with IF1 in the 30S initiation complex.

Its function is as follows. With S4 and S5 plays an important role in translational accuracy. Functionally, interacts with and stabilizes bases of the 16S rRNA that are involved in tRNA selection in the A site and with the mRNA backbone. Located at the interface of the 30S and 50S subunits, it traverses the body of the 30S subunit contacting proteins on the other side and probably holding the rRNA structure together. The combined cluster of proteins S8, S12 and S17 appears to hold together the shoulder and platform of the 30S subunit. This chain is Small ribosomal subunit protein uS12, found in Clostridium novyi (strain NT).